The sequence spans 166 residues: uncharacterized protein (166 aa).

Pentapeptide repeat domains are found at residues 38-77 (GECL…NLRR), 78-117 (ALLD…NLER), and 118-157 (SFLR…EFWE).

This is an uncharacterized protein from Synechocystis sp. (strain ATCC 27184 / PCC 6803 / Kazusa).